A 150-amino-acid chain; its full sequence is Ribonuclease H (150 aa).

Positions 1–141 (MKSIEVHTDG…VDVLARNQAI (141 aa)) constitute an RNase H type-1 domain. Aspartate 9, glutamate 47, aspartate 69, and aspartate 133 together coordinate Mg(2+).

Belongs to the RNase H family. As to quaternary structure, monomer. Requires Mg(2+) as cofactor.

Its subcellular location is the cytoplasm. It catalyses the reaction Endonucleolytic cleavage to 5'-phosphomonoester.. In terms of biological role, endonuclease that specifically degrades the RNA of RNA-DNA hybrids. In Xanthomonas axonopodis pv. citri (strain 306), this protein is Ribonuclease H.